A 179-amino-acid polypeptide reads, in one-letter code: Cell division protein ZapC (179 aa).

This sequence belongs to the ZapC family. As to quaternary structure, interacts directly with FtsZ.

Its subcellular location is the cytoplasm. In terms of biological role, contributes to the efficiency of the cell division process by stabilizing the polymeric form of the cell division protein FtsZ. Acts by promoting interactions between FtsZ protofilaments and suppressing the GTPase activity of FtsZ. The polypeptide is Cell division protein ZapC (Ferrimonas balearica (strain DSM 9799 / CCM 4581 / KCTC 23876 / PAT)).